A 177-amino-acid chain; its full sequence is ATP synthase subunit b, chloroplastic (177 aa).

Residues 22-42 traverse the membrane as a helical segment; sequence ILETNIINLAAVVGIVVFFVG.

Belongs to the ATPase B chain family. As to quaternary structure, F-type ATPases have 2 components, F(1) - the catalytic core - and F(0) - the membrane proton channel. F(1) has five subunits: alpha(3), beta(3), gamma(1), delta(1), epsilon(1). F(0) has four main subunits: a(1), b(1), b'(1) and c(10-14). The alpha and beta chains form an alternating ring which encloses part of the gamma chain. F(1) is attached to F(0) by a central stalk formed by the gamma and epsilon chains, while a peripheral stalk is formed by the delta, b and b' chains.

Its subcellular location is the plastid. It localises to the chloroplast thylakoid membrane. Its function is as follows. F(1)F(0) ATP synthase produces ATP from ADP in the presence of a proton or sodium gradient. F-type ATPases consist of two structural domains, F(1) containing the extramembraneous catalytic core and F(0) containing the membrane proton channel, linked together by a central stalk and a peripheral stalk. During catalysis, ATP synthesis in the catalytic domain of F(1) is coupled via a rotary mechanism of the central stalk subunits to proton translocation. Component of the F(0) channel, it forms part of the peripheral stalk, linking F(1) to F(0). This is ATP synthase subunit b, chloroplastic from Oedogonium cardiacum (Filamentous green alga).